Consider the following 626-residue polypeptide: Nuclear receptor subfamily 4 group A member 3 (626 aa).

Residues 1–108 (MPCVQAQYSP…HHHHHHHHHH (108 aa)) form an activation function (AF)-1 domain region. Positions 1–138 (MPCVQAQYSP…PSTSMYFKQS (138 aa)) are required for DNA-PK heterotrimer. Residues 1-291 (MPCVQAQYSP…SRSSSSGEGT (291 aa)) form an interaction with NCOA1, NCOA2, NCOA3 and KAT2B region. Disordered stretches follow at residues 92-152 (PSYH…PPQA), 192-211 (HFKP…GHHL), and 265-284 (PTAS…PSRS). A compositionally biased stretch (basic residues) spans 93–110 (SYHHHHHHHHHHHHHHQQ). 2 stretches are compositionally biased toward pro residues: residues 140-149 (PSTPTTPAFP) and 195-204 (PSPPHPPAPS). The segment covering 268-284 (SSLLGESPSLPSPPSRS) has biased composition (low complexity). The nuclear receptor DNA-binding region spans 289–364 (EGTCAVCGDN…VGMVKEVVRT (76 aa)). 2 consecutive NR C4-type zinc fingers follow at residues 292–312 (CAVC…CEGC) and 328–352 (CLAN…FQKC). The segment at 364 to 394 (TDSLKGRRGRLPSKPKSPLQQEPSQPSPPSP) is disordered. The span at 377-387 (KPKSPLQQEPS) shows a compositional bias: low complexity. Positions 379–626 (KSPLQQEPSQ…DKLFLDTLPF (248 aa)) are interaction with KAT2B. The region spanning 394–623 (PPICMMNALV…SIIDKLFLDT (230 aa)) is the NR LBD domain.

This sequence belongs to the nuclear hormone receptor family. NR4 subfamily. Interacts with SIX3 (via homeobox); differentially regulates the transcriptional activities of NR4A3. Interacts with the constituents of DNA-PK heterotrimer PRKDC, XRCC6 and XRCC5; phosphorylates and prevents NR4A3 ubiquitinylation and degradation. Interacts with NCOA2; potentiates the activity of the NR4A3. Interacts with NCOA1, NCOA3, MED1 and KAT2B. Interacts with EP300 and NCOA2; mediates the recruitment of MED1 in the coactivator complex. Interacts with NR3C1 (via nuclear receptor DNA-binding domain); the interactions represses transcription activity of NR4A3 on the POMC promoter Nur response element (NurRE). Interacts with TRIM28; the interactions potentiates NR4A3 activity on NurRE promoter. Binds DNA as a monomer and homodimer. Interacts with PARP1; activates PARP1 by improving acetylation of PARP1 and suppressing the interaction between PARP1 and SIRT1. In terms of processing, phosphorylated by PRKDC. Isoform alpha is highly expressed in skeletal muscle. Isoform beta is highly expressed in skeletal muscle and low expressed in fetal brain and placenta.

The protein localises to the nucleus. In terms of biological role, transcriptional activator that binds to regulatory elements in promoter regions in a cell- and response element (target)-specific manner. Induces gene expression by binding as monomers to the NR4A1 response element (NBRE) 5'-AAAAGGTCA-3' site and as homodimers to the Nur response element (NurRE) site in the promoter of their regulated target genes. Plays a role in the regulation of proliferation, survival and differentiation of many different cell types and also in metabolism and inflammation. Mediates proliferation of vascular smooth muscle, myeloid progenitor cell and type B pancreatic cells; promotes mitogen-induced vascular smooth muscle cell proliferation through transactivation of SKP2 promoter by binding a NBRE site. Upon PDGF stimulation, stimulates vascular smooth muscle cell proliferation by regulating CCND1 and CCND2 expression. In islets, induces type B pancreatic cell proliferation through up-regulation of genes that activate cell cycle, as well as genes that cause degradation of the CDKN1A. Negatively regulates myeloid progenitor cell proliferation by repressing RUNX1 in a NBRE site-independent manner. During inner ear, plays a role as a key mediator of the proliferative growth phase of semicircular canal development. Also mediates survival of neuron and smooth muscle cells; mediates CREB-induced neuronal survival, and during hippocampus development, plays a critical role in pyramidal cell survival and axonal guidance. Is required for S phase entry of the cell cycle and survival of smooth muscle cells by inducing CCND1, resulting in RB1 phosphorylation. Binds to NBRE motif in CCND1 promoter, resulting in the activation of the promoter and CCND1 transcription. Also plays a role in inflammation; upon TNF stimulation, mediates monocyte adhesion by inducing the expression of VCAM1 and ICAM1 by binding to the NBRE consensus site. In mast cells activated by Fc-epsilon receptor cross-linking, promotes the synthesis and release of cytokines but impairs events leading to degranulation. Also plays a role in metabolism; by modulating feeding behavior; and by playing a role in energy balance by inhibiting the glucocorticoid-induced orexigenic neuropeptides AGRP expression, at least in part by forming a complex with activated NR3C1 on the AGRP- glucocorticoid response element (GRE), and thus weakening the DNA binding activity of NR3C1. Upon catecholamines stimulation, regulates gene expression that controls oxidative metabolism in skeletal muscle. Plays a role in glucose transport by regulating translocation of the SLC2A4 glucose transporter to the cell surface. Finally, during gastrulation plays a crucial role in the formation of anterior mesoderm by controlling cell migration. Inhibits adipogenesis. Also participates in cardiac hypertrophy by activating PARP1. This chain is Nuclear receptor subfamily 4 group A member 3 (NR4A3), found in Homo sapiens (Human).